We begin with the raw amino-acid sequence, 371 residues long: 4-hydroxy-3-methylbut-2-en-1-yl diphosphate synthase (flavodoxin) (371 aa).

[4Fe-4S] cluster contacts are provided by Cys270, Cys273, Cys305, and Glu312.

This sequence belongs to the IspG family. Requires [4Fe-4S] cluster as cofactor.

The catalysed reaction is (2E)-4-hydroxy-3-methylbut-2-enyl diphosphate + oxidized [flavodoxin] + H2O + 2 H(+) = 2-C-methyl-D-erythritol 2,4-cyclic diphosphate + reduced [flavodoxin]. The protein operates within isoprenoid biosynthesis; isopentenyl diphosphate biosynthesis via DXP pathway; isopentenyl diphosphate from 1-deoxy-D-xylulose 5-phosphate: step 5/6. In terms of biological role, converts 2C-methyl-D-erythritol 2,4-cyclodiphosphate (ME-2,4cPP) into 1-hydroxy-2-methyl-2-(E)-butenyl 4-diphosphate. This Shewanella piezotolerans (strain WP3 / JCM 13877) protein is 4-hydroxy-3-methylbut-2-en-1-yl diphosphate synthase (flavodoxin).